Consider the following 277-residue polypeptide: 3-methyl-2-oxobutanoate hydroxymethyltransferase (277 aa).

Mg(2+) contacts are provided by Asp-49 and Asp-88. Residues 49 to 50, Asp-88, and Lys-118 each bind 3-methyl-2-oxobutanoate; that span reads DS. Glu-120 provides a ligand contact to Mg(2+). Glu-186 serves as the catalytic Proton acceptor.

Belongs to the PanB family. In terms of assembly, homodecamer; pentamer of dimers. Requires Mg(2+) as cofactor.

It is found in the cytoplasm. It carries out the reaction 3-methyl-2-oxobutanoate + (6R)-5,10-methylene-5,6,7,8-tetrahydrofolate + H2O = 2-dehydropantoate + (6S)-5,6,7,8-tetrahydrofolate. It participates in cofactor biosynthesis; (R)-pantothenate biosynthesis; (R)-pantoate from 3-methyl-2-oxobutanoate: step 1/2. Functionally, catalyzes the reversible reaction in which hydroxymethyl group from 5,10-methylenetetrahydrofolate is transferred onto alpha-ketoisovalerate to form ketopantoate. In Cereibacter sphaeroides (strain ATCC 17029 / ATH 2.4.9) (Rhodobacter sphaeroides), this protein is 3-methyl-2-oxobutanoate hydroxymethyltransferase.